The following is a 1648-amino-acid chain: Vitellogenin-6 (1648 aa).

Positions 1-15 (MRFAVLLALFGLALA) are cleaved as a signal peptide. Residues 26 to 691 (YRSGREYRYQ…SNDSVLPKEI (666 aa)) form the Vitellogenin domain. 2 disulfide bridges follow: Cys-178–Cys-203 and Cys-219–Cys-222. 3 N-linked (GlcNAc...) asparagine glycosylation sites follow: Asn-237, Asn-371, and Asn-683. Positions 1070–1092 (EKNVEYEQEDKEPKSSQLQSQIR) are disordered. N-linked (GlcNAc...) asparagine glycosylation occurs at Asn-1295. Residues 1346 to 1514 (PECIVKSKEI…SYLSKDDECE (169 aa)) form the VWFD domain. Cystine bridges form between Cys-1348–Cys-1477 and Cys-1370–Cys-1513. Residues Asn-1584 and Asn-1617 are each glycosylated (N-linked (GlcNAc...) asparagine).

Post-translationally, the precursor protein is probably further processed into vitellin polypeptides VT2 and VT3. Both VT2 and VT3 polypeptides seem to be N-glycosylated.

It localises to the secreted. In terms of biological role, precursor of the egg-yolk proteins that are sources of nutrients during embryonic development. The polypeptide is Vitellogenin-6 (vit-6) (Oscheius tipulae).